A 627-amino-acid chain; its full sequence is (-)-beta-pinene synthase 1, chloroplastic (627 aa).

Residues 1-50 constitute a chloroplast transit peptide; that stretch reads MDLISVLPSTSKSCVCLHKPLSSSTHKLKPFCRTIRILGMPRPRKSVLMA. Mg(2+) is bound by residues aspartate 378, aspartate 382, and aspartate 530. The DDXXD motif signature appears at 378 to 382; sequence DDMYD.

Belongs to the terpene synthase family. Tpsd subfamily. Mg(2+) is required as a cofactor. The cofactor is Mn(2+).

The protein resides in the plastid. It localises to the chloroplast. It carries out the reaction (2E)-geranyl diphosphate = (1S,5S)-beta-pinene + diphosphate. The catalysed reaction is (2E)-geranyl diphosphate = (1S,5S)-alpha-pinene + diphosphate. It functions in the pathway terpene metabolism; oleoresin biosynthesis. It participates in secondary metabolite biosynthesis; terpenoid biosynthesis. Its function is as follows. Monoterpene synthase (TPS) involved in the biosynthesis of monoterpene natural products included in conifer oleoresin secretions and volatile emissions; these compounds contribute to biotic and abiotic stress defense against herbivores and pathogens. Catalyzes the conversion of (2E)-geranyl diphosphate (GPP) to (-)-beta-pinene and, to a lower extent, to (-)-alpha-pinene. This chain is (-)-beta-pinene synthase 1, chloroplastic, found in Pinus contorta (Shore pine).